The primary structure comprises 150 residues: Large ribosomal subunit protein bL9 (150 aa).

This sequence belongs to the bacterial ribosomal protein bL9 family.

Functionally, binds to the 23S rRNA. The chain is Large ribosomal subunit protein bL9 from Mycoplasma genitalium (strain ATCC 33530 / DSM 19775 / NCTC 10195 / G37) (Mycoplasmoides genitalium).